Reading from the N-terminus, the 204-residue chain is Somatotropin (204 aa).

A signal peptide spans 1–17 (MDKVLFLLFVLSLGVSS). Glutamine 18 bears the Pyrrolidone carboxylic acid mark. Histidine 36 is a binding site for Zn(2+). Cysteines 69 and 177 form a disulfide. Glutamate 186 serves as a coordination point for Zn(2+). The cysteines at positions 194 and 202 are disulfide-linked.

The protein belongs to the somatotropin/prolactin family.

The protein localises to the secreted. Its function is as follows. Growth hormone plays an important role in growth control and is involved in the regulation of several anabolic processes. Implicated as an osmoregulatory substance important for seawater adaptation. The polypeptide is Somatotropin (gh) (Trichopodus trichopterus (Three spot gourami)).